Reading from the N-terminus, the 347-residue chain is DNA-directed RNA polymerase subunit alpha (347 aa).

The alpha N-terminal domain (alpha-NTD) stretch occupies residues 1 to 243 (MLIKQGDRLI…DQISVFINFD (243 aa)). Residues 260–347 (VNENLFKGID…EWKRKQQNEA (88 aa)) form an alpha C-terminal domain (alpha-CTD) region.

This sequence belongs to the RNA polymerase alpha chain family. As to quaternary structure, homodimer. The RNAP catalytic core consists of 2 alpha, 1 beta, 1 beta' and 1 omega subunit. When a sigma factor is associated with the core the holoenzyme is formed, which can initiate transcription.

The enzyme catalyses RNA(n) + a ribonucleoside 5'-triphosphate = RNA(n+1) + diphosphate. Its function is as follows. DNA-dependent RNA polymerase catalyzes the transcription of DNA into RNA using the four ribonucleoside triphosphates as substrates. In Nitratidesulfovibrio vulgaris (strain DSM 19637 / Miyazaki F) (Desulfovibrio vulgaris), this protein is DNA-directed RNA polymerase subunit alpha.